The primary structure comprises 592 residues: Endoribonuclease Arlr (592 aa).

The signal sequence occupies residues 1–24; it reads MRCLALSAVFLCLTLAGHFHLSDA. Residues 83-329 are disordered; it reads PTAANKPPPL…FQSSGNSVAT (247 aa). A compositionally biased stretch (polar residues) spans 109-120; that stretch reads PGSSPFGASQNP. 2 stretches are compositionally biased toward low complexity: residues 134–144 and 188–209; these read PSHPSQPSQPS and GISS…TGKT. Composition is skewed to pro residues over residues 234–249 and 258–267; these read LPAP…PTPG and LPTPQHPVHP. A compositionally biased stretch (low complexity) spans 268–294; sequence PTKATSAATPTPTPTPSFSSSVTPTPA. The 264-residue stretch at 329–592 folds into the EndoU domain; sequence TDDEIRQLTE…NLIGSAYPEI (264 aa). Residues H473, H488, and K531 contribute to the active site.

The protein belongs to the ENDOU family. As to quaternary structure, monomer. The cofactor is Mn(2+). Predominantly expressed in head. Expressed in fat body cells.

It is found in the endoplasmic reticulum lumen. Its subcellular location is the secreted. The enzyme catalyses a ribonucleotidyl-ribonucleotide-RNA + H2O = a 3'-end 3'-phospho-ribonucleotide-RNA + a 5'-end dephospho-ribonucleoside-RNA + H(+). In terms of biological role, endoribonuclease that cleaves single-stranded RNAs; unlike its paralog EndoU it does not appear to preferentially cleave at uridylates and releases linear products instead of products that have 2'-3'-cyclic phosphate termini. Preferentially cleaves single stranded RNA at sites with AU, UC and poly-U sites cleaved less efficiently. Targets mRNAs encoding proteins involved in lipid metabolism, particularly those involved in lipolysis, to regulate their expression. The sequence is that of Endoribonuclease Arlr from Drosophila melanogaster (Fruit fly).